The following is a 98-amino-acid chain: NADH-ubiquinone oxidoreductase chain 4L (98 aa).

Transmembrane regions (helical) follow at residues 2–22, 29–49, and 61–81; these read LSIS…MLMF, SLLC…LIIL, and ILLL…LVMV.

This sequence belongs to the complex I subunit 4L family. As to quaternary structure, core subunit of respiratory chain NADH dehydrogenase (Complex I) which is composed of 45 different subunits.

The protein localises to the mitochondrion inner membrane. It carries out the reaction a ubiquinone + NADH + 5 H(+)(in) = a ubiquinol + NAD(+) + 4 H(+)(out). Functionally, core subunit of the mitochondrial membrane respiratory chain NADH dehydrogenase (Complex I) which catalyzes electron transfer from NADH through the respiratory chain, using ubiquinone as an electron acceptor. Part of the enzyme membrane arm which is embedded in the lipid bilayer and involved in proton translocation. The sequence is that of NADH-ubiquinone oxidoreductase chain 4L (MT-ND4L) from Microcebus ravelobensis (Golden-brown mouse lemur).